A 278-amino-acid polypeptide reads, in one-letter code: Potassium/proton antiporter CemA (278 aa).

A run of 4 helical transmembrane segments spans residues Val61–Gly81, Cys154–Ile174, Ile203–Ile223, and Phe238–Ile258.

It belongs to the CemA family.

The protein resides in the plastid. Its subcellular location is the chloroplast inner membrane. The enzyme catalyses K(+)(in) + H(+)(out) = K(+)(out) + H(+)(in). Functionally, contributes to K(+)/H(+) antiport activity by supporting proton efflux to control proton extrusion and homeostasis in chloroplasts in a light-dependent manner to modulate photosynthesis. Prevents excessive induction of non-photochemical quenching (NPQ) under continuous-light conditions. Indirectly promotes efficient inorganic carbon uptake into chloroplasts. The chain is Potassium/proton antiporter CemA from Gracilaria tenuistipitata var. liui (Red alga).